The sequence spans 325 residues: Endo-1,4-beta-xylanase 2 (325 aa).

The N-terminal stretch at 1 to 18 is a signal peptide; sequence MLYTSIFAAAMAASGAMA. Positions 26-325 constitute a GH10 domain; that stretch reads ASNCTTLDSF…KAAVKAIMAI (300 aa). An N-linked (GlcNAc...) asparagine glycan is attached at Asn28. Glu157 serves as the catalytic Proton donor. The active-site Nucleophile is Glu262. Cys280 and Cys286 are oxidised to a cystine.

Belongs to the glycosyl hydrolase 10 (cellulase F) family.

Its subcellular location is the secreted. The catalysed reaction is Endohydrolysis of (1-&gt;4)-beta-D-xylosidic linkages in xylans.. Its pathway is glycan degradation; xylan degradation. Endo-1,4-beta-xylanase involved in the hydrolysis of xylan, a major structural heterogeneous polysaccharide found in plant biomass representing the second most abundant polysaccharide in the biosphere, after cellulose. The chain is Endo-1,4-beta-xylanase 2 (xyl2) from Claviceps purpurea (Ergot fungus).